A 318-amino-acid polypeptide reads, in one-letter code: MSVWAIGDLQGCYDITQRLLEKINFDPAQDTLWFCGDLVNRGGQSLETLRLVHSLRAHSVVVLGNHDLSLLAIGARSEEEQRKVNPDLLRIVLAKDRDALLDWLRMQKLAHVDRALGWMMIHAGLAPKWTTQMAEKHAREVEQQLQGGGYRKLLRNMYGDQPGWSPGLIGYDRSRAIINLFTRMRYCTPRGRIATDDKGTPGTQAQGLYPWFEVPGRVERDLKIVCGHWSALGLTITQGVHAIDTGAVWGGKLTALQLDTDELRVVQVPGREVTGPAPVARAPRRPRERLGRQRSRGNRGNAGNTAVPAKPPVDTPQD.

The disordered stretch occupies residues 269-318 (PGREVTGPAPVARAPRRPRERLGRQRSRGNRGNAGNTAVPAKPPVDTPQD). The span at 282-297 (APRRPRERLGRQRSRG) shows a compositional bias: basic residues. The segment covering 309–318 (AKPPVDTPQD) has biased composition (pro residues).

This sequence belongs to the Ap4A hydrolase family.

It carries out the reaction P(1),P(4)-bis(5'-adenosyl) tetraphosphate + H2O = 2 ADP + 2 H(+). In terms of biological role, hydrolyzes diadenosine 5',5'''-P1,P4-tetraphosphate to yield ADP. In Xanthomonas oryzae pv. oryzae (strain MAFF 311018), this protein is Bis(5'-nucleosyl)-tetraphosphatase, symmetrical.